A 94-amino-acid chain; its full sequence is Phosphoribosyl-ATP pyrophosphatase (94 aa).

The protein belongs to the PRA-PH family.

The protein localises to the cytoplasm. The catalysed reaction is 1-(5-phospho-beta-D-ribosyl)-ATP + H2O = 1-(5-phospho-beta-D-ribosyl)-5'-AMP + diphosphate + H(+). It participates in amino-acid biosynthesis; L-histidine biosynthesis; L-histidine from 5-phospho-alpha-D-ribose 1-diphosphate: step 2/9. The polypeptide is Phosphoribosyl-ATP pyrophosphatase (hisE) (Saccharolobus solfataricus (strain ATCC 35092 / DSM 1617 / JCM 11322 / P2) (Sulfolobus solfataricus)).